The following is a 295-amino-acid chain: Aspartate carbamoyltransferase catalytic subunit (295 aa).

The carbamoyl phosphate site is built by Arg-49 and Thr-50. Position 77 (Lys-77) interacts with L-aspartate. Carbamoyl phosphate is bound by residues Arg-99, His-127, and Gln-130. L-aspartate contacts are provided by Arg-161 and Arg-212. The carbamoyl phosphate site is built by Gly-251 and Pro-252.

This sequence belongs to the aspartate/ornithine carbamoyltransferase superfamily. ATCase family. Heterododecamer (2C3:3R2) of six catalytic PyrB chains organized as two trimers (C3), and six regulatory PyrI chains organized as three dimers (R2).

It catalyses the reaction carbamoyl phosphate + L-aspartate = N-carbamoyl-L-aspartate + phosphate + H(+). It functions in the pathway pyrimidine metabolism; UMP biosynthesis via de novo pathway; (S)-dihydroorotate from bicarbonate: step 2/3. In terms of biological role, catalyzes the condensation of carbamoyl phosphate and aspartate to form carbamoyl aspartate and inorganic phosphate, the committed step in the de novo pyrimidine nucleotide biosynthesis pathway. This Campylobacter jejuni (strain RM1221) protein is Aspartate carbamoyltransferase catalytic subunit.